A 953-amino-acid polypeptide reads, in one-letter code: Leucine-rich repeat receptor protein kinase HPCA1 (953 aa).

Positions 1–23 (MSSRTGASLLLILFFFQICSVSA) are cleaved as a signal peptide. Over 24–558 (LTNGLDASAL…EVSSKSSNKS (535 aa)) the chain is Extracellular. LRR repeat units lie at residues 64 to 88 (NDRV…ISFL), 89 to 113 (SELR…IGNL), 115 to 137 (KLRN…IGTL), 138 to 162 (KELI…GLLS), 164 to 187 (LYWF…TSAP), and 192 to 216 (LLQT…LFSS). Asn-182 carries an N-linked (GlcNAc...) asparagine glycan. N-linked (GlcNAc...) asparagine glycosylation occurs at Asn-217. LRR repeat units lie at residues 218–241 (MSLI…LSLV), 242–265 (KTLT…LNNL), 266–290 (TNLN…SLTS), 292–311 (YTLD…SWIS), 313–337 (LPSL…FFSP), 339–361 (QLQT…TDVS), and 362–384 (SQLE…ANKV). N-linked (GlcNAc...) asparagine glycans are attached at residues Asn-264, Asn-284, and Asn-298. Asn-411 is a glycosylation site (N-linked (GlcNAc...) asparagine). Intrachain disulfides connect Cys-421–Cys-424 and Cys-434–Cys-436. N-linked (GlcNAc...) asparagine glycosylation is found at Asn-456, Asn-459, Asn-510, and Asn-523. Residues 559–579 (ILIGAVVGVVVLLLLLTIAGI) traverse the membrane as a helical segment. The Cytoplasmic segment spans residues 580–953 (YALRQKKRAE…NFPASKLEPQ (374 aa)). 2 positions are modified to phosphoserine: Ser-606 and Ser-607. One can recognise a Protein kinase domain in the interval 631 to 905 (FSEANDVGGG…EVVKEIENIM (275 aa)). Residues 637–645 (VGGGGYGKV) and Lys-659 each bind ATP. The Proton acceptor role is filled by Asp-755. Phosphothreonine is present on residues Thr-786, Thr-789, and Thr-790. The segment covering 912 to 921 (PNSDSATSSR) has biased composition (polar residues). Residues 912 to 953 (PNSDSATSSRTYEDAIKGSGDPYGSESFQYSGNFPASKLEPQ) form a disordered region. The residue at position 942 (Ser-942) is a Phosphoserine.

It belongs to the protein kinase superfamily. Ser/Thr protein kinase family. Autophosphorylated at Ser-606, Ser-607, Thr-786, Thr-789, Thr-790 and Ser-942 in response to extracellular hydrogen peroxide. As to expression, widely expressed.

The protein localises to the cell membrane. It carries out the reaction L-seryl-[protein] + ATP = O-phospho-L-seryl-[protein] + ADP + H(+). The catalysed reaction is L-threonyl-[protein] + ATP = O-phospho-L-threonyl-[protein] + ADP + H(+). Activated by autophosphorylation on serine and threonine residues in response to extracellular hydrogen peroxide. In terms of biological role, leucine-rich repeat receptor protein kinase that acts as sensor of extracellular hydrogen peroxide. Required for intracellular calcium influx in response to extracellular hydrogen peroxide. Mediates hydrogen peroxide-induced activation of calcium channels in guard cells and is required for stomatal closure. This chain is Leucine-rich repeat receptor protein kinase HPCA1, found in Arabidopsis thaliana (Mouse-ear cress).